Here is a 345-residue protein sequence, read N- to C-terminus: Glycerol-3-phosphate dehydrogenase [NAD(P)+] (345 aa).

NADPH is bound by residues S23, Y24, H44, and K118. Positions 118, 147, and 149 each coordinate sn-glycerol 3-phosphate. Residue A151 participates in NADPH binding. Sn-glycerol 3-phosphate contacts are provided by K203, D256, S266, R267, and N268. Residue K203 is the Proton acceptor of the active site. R267 is an NADPH binding site. Positions 291 and 293 each coordinate NADPH.

It belongs to the NAD-dependent glycerol-3-phosphate dehydrogenase family.

Its subcellular location is the cytoplasm. The enzyme catalyses sn-glycerol 3-phosphate + NAD(+) = dihydroxyacetone phosphate + NADH + H(+). It catalyses the reaction sn-glycerol 3-phosphate + NADP(+) = dihydroxyacetone phosphate + NADPH + H(+). Its pathway is membrane lipid metabolism; glycerophospholipid metabolism. Catalyzes the reduction of the glycolytic intermediate dihydroxyacetone phosphate (DHAP) to sn-glycerol 3-phosphate (G3P), the key precursor for phospholipid synthesis. The polypeptide is Glycerol-3-phosphate dehydrogenase [NAD(P)+] (Vibrio campbellii (strain ATCC BAA-1116)).